Consider the following 118-residue polypeptide: MSPSESFNSFSLFSTLSMFKFLTQITFSRPFVYSALNKGCPDFLITSNCIHGNSWPHLSNLFEVKNFLMPSEDPPQLQNCKVIFLHGNTNAPTPLRPMEFRAIAFTTISPYIRVCVST.

The protein resides in the mitochondrion. Functionally, essential for the functional mitochondria and respiratory growth. This chain is Mitochondrial protein YPR099C, found in Saccharomyces cerevisiae (strain ATCC 204508 / S288c) (Baker's yeast).